Here is a 340-residue protein sequence, read N- to C-terminus: 7,8-didemethyl-8-hydroxy-5-deazariboflavin synthase (340 aa).

Residues 25 to 256 (ATYSPAYTIV…SDITIQIPPN (232 aa)) enclose the Radical SAM core domain. The [4Fe-4S] cluster site is built by Cys-39, Cys-43, and Cys-46.

Belongs to the radical SAM superfamily. CofG family. Consists of two subunits, CofG and CofH. [4Fe-4S] cluster is required as a cofactor.

The enzyme catalyses 5-amino-5-(4-hydroxybenzyl)-6-(D-ribitylimino)-5,6-dihydrouracil + S-adenosyl-L-methionine = 7,8-didemethyl-8-hydroxy-5-deazariboflavin + 5'-deoxyadenosine + L-methionine + NH4(+) + H(+). It participates in cofactor biosynthesis; coenzyme F0 biosynthesis. In terms of biological role, catalyzes the radical-mediated synthesis of 7,8-didemethyl-8-hydroxy-5-deazariboflavin from 5-amino-5-(4-hydroxybenzyl)-6-(D-ribitylimino)-5,6-dihydrouracil. The chain is 7,8-didemethyl-8-hydroxy-5-deazariboflavin synthase from Trichormus variabilis (strain ATCC 29413 / PCC 7937) (Anabaena variabilis).